Reading from the N-terminus, the 128-residue chain is Nanos homolog 1 (128 aa).

Residues 7–23 (FDSWSDYLGLSSLISRG) form an essential for its translational repressor activity region. Positions 23 to 56 (GLQPRGEGENPSPRWNVSCPAPAEPLPSKEPEGR) are disordered. A Nanos-type zinc finger spans residues 60 to 114 (GCGFCRSNKEAMSLYSSHRLRSLDGRVLCPVLRGYTCPLCGANGDWAHTMRYCPL). Residues C61, C64, H77, C88, C96, C99, H107, and C112 each coordinate Zn(2+). 2 short sequence motifs (C2HC) span residues 61-88 (CGFCRSNKEAMSLYSSHRLRSLDGRVLC) and 96-112 (CPLCGANGDWAHTMRYC).

It belongs to the nanos family. In terms of assembly, interacts with ccnb1.

It is found in the cytoplasm. The protein resides in the perinuclear region. Its function is as follows. Acts as a translational repressor. Can mediate repression affecting different steps in the translation process: cap-driven, IRES-driven, polyadenylated RNAs or nonpolyadenylated RNAs. Essential for the development of primordial germ cells (PGCs) by ensuring their proper migration and survival. This is Nanos homolog 1 (nanos1) from Xenopus borealis (Kenyan clawed frog).